We begin with the raw amino-acid sequence, 2506 residues long: Zinc finger protein 462 (2506 aa).

3 C2H2-type zinc fingers span residues 4-27 (LQCD…QDVH), 108-131 (FQCK…RKVH), and 162-185 (FSCQ…KMYH). Residue Lys-20 forms a Glycyl lysine isopeptide (Lys-Gly) (interchain with G-Cter in SUMO1); alternate linkage. Residue Lys-20 forms a Glycyl lysine isopeptide (Lys-Gly) (interchain with G-Cter in SUMO2); alternate linkage. The segment at 215–241 (PCKELPAEVVERSILESMVKPLTKSRG) is interaction with PBX1. Glycyl lysine isopeptide (Lys-Gly) (interchain with G-Cter in SUMO2) cross-links involve residues Lys-234 and Lys-271. The segment at 280–299 (QEGTNLPDVPNKSAPSPTSN) is disordered. O-linked (GlcNAc6P) serine glycosylation is found at Ser-292 and Ser-309. Glycyl lysine isopeptide (Lys-Gly) (interchain with G-Cter in SUMO2) cross-links involve residues Lys-337, Lys-347, and Lys-349. A disordered region spans residues 337–356 (KFSPMSYPQMKPKSPHNSGL). Phosphoserine occurs at positions 350 and 354. Residue Lys-428 forms a Glycyl lysine isopeptide (Lys-Gly) (interchain with G-Cter in SUMO2) linkage. 2 C2H2-type zinc fingers span residues 439 to 462 (FQCP…ENIH) and 470 to 492 (YKCD…KQCH). A Glycyl lysine isopeptide (Lys-Gly) (interchain with G-Cter in SUMO2) cross-link involves residue Lys-484. The disordered stretch occupies residues 535-596 (DPLQQQQPPQ…QPQPPTQAAP (62 aa)). Over residues 542-593 (PPQPPPPPPPPPPSQPQPLQQPQPPQLQPPHQVPPQPQTQPPPTQQPQPPTQ) the composition is skewed to pro residues. The segment at 600-623 (YKCTMCNYSTTTLKGLRVHQQHKH) adopts a C2H2-type 6 zinc-finger fold. Residues Lys-631, Lys-657, and Lys-668 each participate in a glycyl lysine isopeptide (Lys-Gly) (interchain with G-Cter in SUMO2) cross-link. Positions 636–661 (PSSLPLENETDSHPSSSNTVKKSQTS) are disordered. The span at 648 to 661 (HPSSSNTVKKSQTS) shows a compositional bias: polar residues. The residue at position 688 (Ser-688) is a Phosphoserine. Residues Lys-706 and Asp-849 each participate in a glycyl lysine isopeptide (Lys-Gly) (interchain with G-Cter in SUMO2) cross-link. 3 C2H2-type zinc fingers span residues 843–866 (YYCK…QRMH), 886–908 (YRCL…YGEH), and 925–948 (YRCR…QRMH). A Glycyl lysine isopeptide (Lys-Gly) (interchain with G-Cter in SUMO2) cross-link involves residue Lys-986. A C2H2-type 10 zinc finger spans residues 1030 to 1053 (YDCDVCSFASPNMHSVLVHYQKKH). At Ser-1090 the chain carries Phosphoserine. Lys-1135 is covalently cross-linked (Glycyl lysine isopeptide (Lys-Gly) (interchain with G-Cter in SUMO2)). Residues 1157–1186 (MRGVEGPQGSPRPPAPIQQLNRSSSERDGP) form a disordered region. Ser-1166 carries the post-translational modification Phosphoserine. Residues Lys-1206, Lys-1214, Lys-1220, and Lys-1243 each participate in a glycyl lysine isopeptide (Lys-Gly) (interchain with G-Cter in SUMO2) cross-link. 2 consecutive C2H2-type zinc fingers follow at residues 1265–1288 (LKCR…KKDH) and 1470–1493 (YQCT…GKKH). Residue Lys-1499 forms a Glycyl lysine isopeptide (Lys-Gly) (interchain with G-Cter in SUMO2) linkage. The C2H2-type 13 zinc finger occupies 1515 to 1538 (YKCRHCPYINTRIHGVLTHYQKRH). Residues Lys-1571 and Lys-1591 each participate in a glycyl lysine isopeptide (Lys-Gly) (interchain with G-Cter in SUMO2) cross-link. 3 consecutive C2H2-type zinc fingers follow at residues 1577 to 1600 (YRCK…EKYH), 1660 to 1683 (FRCQ…RIKH), and 1697 to 1720 (FKCA…QKRH). Residues Lys-1698 and Lys-1780 each participate in a glycyl lysine isopeptide (Lys-Gly) (interchain with G-Cter in SUMO2) cross-link. The segment at 1892-1914 (YQCKHCDSKLQSTAELTSHLNIH) adopts a C2H2-type 17 zinc-finger fold. Lys-1946 participates in a covalent cross-link: Glycyl lysine isopeptide (Lys-Gly) (interchain with G-Cter in SUMO2). A C2H2-type 18; degenerate zinc finger spans residues 1968–1992 (YKCKFCVEVHPTLRAICNHLRKHVQ). Lys-2004 bears the N6-methyllysine mark. 3 C2H2-type zinc fingers span residues 2025–2048 (YSCQ…QTHH), 2054–2077 (FRCK…LKAH), and 2083–2106 (YKCS…LKVH). A Glycyl lysine isopeptide (Lys-Gly) (interchain with G-Cter in SUMO2) cross-link involves residue Lys-2104. The interval 2122–2152 (SSHSHHSSQKATPAEEVEDSNDSSYSEPPDV) is disordered. Residues 2143-2152 (DSSYSEPPDV) show a composition bias toward polar residues. Phosphoserine is present on residues Ser-2172 and Ser-2177. 3 C2H2-type zinc fingers span residues 2191–2214 (LHCE…RDKH), 2220–2243 (FKCK…EAGH), and 2254–2276 (LRCP…IVLH). A Glycyl lysine isopeptide (Lys-Gly) (interchain with G-Cter in SUMO2) cross-link involves residue Lys-2293. C2H2-type zinc fingers lie at residues 2300-2322 (FRCD…IEKH) and 2328-2351 (YKCQ…RDEH). The disordered stretch occupies residues 2371-2396 (MKEKMESSSSDDEDKEEEMNSKAEDR). A C2H2-type 27 zinc finger spans residues 2414-2436 (FPCEFCGRAFSQGSEWERHVLRH). Glycyl lysine isopeptide (Lys-Gly) (interchain with G-Cter in SUMO2) cross-links involve residues Lys-2444 and Lys-2504.

As to quaternary structure, interacts with PBX1; this interaction prevents PBX1-HOXA9 heterodimer from forming and binding to DNA. O-GlcNAcylated with O-GlcNAc-6-phosphate.

It localises to the nucleus. Functionally, zinc finger nuclear factor involved in transcription by regulating chromatin structure and organization. Involved in the pluripotency and differentiation of embryonic stem cells by regulating SOX2, POU5F1/OCT4, and NANOG. By binding PBX1, prevents the heterodimerization of PBX1 and HOXA9 and their binding to DNA. Regulates neuronal development and neural cell differentiation. This Homo sapiens (Human) protein is Zinc finger protein 462.